Consider the following 635-residue polypeptide: Probable ethylene response sensor 2 (635 aa).

Transmembrane regions (helical) follow at residues 24 to 44 (ISDF…IYFV), 59 to 79 (FGAF…TFAI), and 94 to 114 (ATAV…PDLL). Cu cation contacts are provided by Cys-66 and His-70. The 150-residue stretch at 159 to 308 (DRHTILRTTL…VVADQVAVAL (150 aa)) folds into the GAF domain. The 239-residue stretch at 351-589 (VMNHEMRTPM…MFFVKLGMPE (239 aa)) folds into the Histidine kinase domain. His-354 is modified (phosphohistidine; by autocatalysis).

It belongs to the ethylene receptor family. In terms of assembly, homodimer. Cu cation serves as cofactor. As to expression, expressed in anthers and hulls.

Its subcellular location is the endoplasmic reticulum membrane. It carries out the reaction ATP + protein L-histidine = ADP + protein N-phospho-L-histidine.. In terms of biological role, ethylene receptor related to bacterial two-component regulators. Acts as a negative regulator of ethylene signaling. May play a role in the regulation of flowering by up-regulating GI (GIGANTEA) and RCN1 and regulate starch accumulation by down-regulating the alpha-amylase AMY3D. This Oryza sativa subsp. indica (Rice) protein is Probable ethylene response sensor 2.